Here is a 261-residue protein sequence, read N- to C-terminus: Putative hydro-lyase VSAL_I1435 (261 aa).

Belongs to the D-glutamate cyclase family.

This is Putative hydro-lyase VSAL_I1435 from Aliivibrio salmonicida (strain LFI1238) (Vibrio salmonicida (strain LFI1238)).